Here is a 297-residue protein sequence, read N- to C-terminus: MSEQISEQSEQNVYGACPPVPAGESSPSAASAPRTKVRTHHLQKWKAEGHKWAMLTVYDYSTARAFDDAGIPVLLVGDSAANVVYGYDTTVPISIDELIPLVRGVVRGAPHALVVADLPFGSYESGPSAALAAATRFMKEAGAHAVKLEGGERVAEQIACLTAAGIPVMAHIGFTPQSVNTLGGFRVQGRGDAAEQTIADAIAVAEAGAFSVVMEMVPAELATQITGKLTIPTIGIGAGPSCDGQVLVWQDMAGLSSGKAPRFVKRYADVGGELRRAAVQYAQDVAGGVFPAEEHCF.

Residues 1-12 (MSEQISEQSEQN) show a composition bias toward polar residues. Residues 1-36 (MSEQISEQSEQNVYGACPPVPAGESSPSAASAPRTK) form a disordered region. Over residues 22 to 33 (AGESSPSAASAP) the composition is skewed to low complexity. D78 and D117 together coordinate Mg(2+). 3-methyl-2-oxobutanoate is bound by residues 78–79 (DS), D117, and K147. E149 serves as a coordination point for Mg(2+). E215 serves as the catalytic Proton acceptor.

The protein belongs to the PanB family. In terms of assembly, homodecamer; pentamer of dimers. The cofactor is Mg(2+).

It localises to the cytoplasm. It catalyses the reaction 3-methyl-2-oxobutanoate + (6R)-5,10-methylene-5,6,7,8-tetrahydrofolate + H2O = 2-dehydropantoate + (6S)-5,6,7,8-tetrahydrofolate. The protein operates within cofactor biosynthesis; (R)-pantothenate biosynthesis; (R)-pantoate from 3-methyl-2-oxobutanoate: step 1/2. Catalyzes the reversible reaction in which hydroxymethyl group from 5,10-methylenetetrahydrofolate is transferred onto alpha-ketoisovalerate to form ketopantoate. The polypeptide is 3-methyl-2-oxobutanoate hydroxymethyltransferase (Mycobacterium ulcerans (strain Agy99)).